The primary structure comprises 344 residues: Meiotic expression up-regulated protein 26 (344 aa).

It is found in the nucleus. In Schizosaccharomyces pombe (strain 972 / ATCC 24843) (Fission yeast), this protein is Meiotic expression up-regulated protein 26 (meu26).